A 213-amino-acid chain; its full sequence is Pyridoxine/pyridoxamine 5'-phosphate oxidase 2 (213 aa).

Substrate contacts are provided by residues 9–12 and lysine 67; that span reads RQRY. Residues 62-67, 77-78, lysine 84, and glutamine 106 each bind FMN; these read RTVLLK and FT. Residues tyrosine 124, arginine 128, and serine 132 each contribute to the substrate site. FMN-binding positions include 141 to 142 and tryptophan 186; that span reads QS. 192–194 serves as a coordination point for substrate; that stretch reads RLH. Arginine 196 is a binding site for FMN.

This sequence belongs to the pyridoxamine 5'-phosphate oxidase family. As to quaternary structure, homodimer. The cofactor is FMN.

The catalysed reaction is pyridoxamine 5'-phosphate + O2 + H2O = pyridoxal 5'-phosphate + H2O2 + NH4(+). It catalyses the reaction pyridoxine 5'-phosphate + O2 = pyridoxal 5'-phosphate + H2O2. It functions in the pathway cofactor metabolism; pyridoxal 5'-phosphate salvage; pyridoxal 5'-phosphate from pyridoxamine 5'-phosphate: step 1/1. It participates in cofactor metabolism; pyridoxal 5'-phosphate salvage; pyridoxal 5'-phosphate from pyridoxine 5'-phosphate: step 1/1. Functionally, catalyzes the oxidation of either pyridoxine 5'-phosphate (PNP) or pyridoxamine 5'-phosphate (PMP) into pyridoxal 5'-phosphate (PLP). In Hydrogenovibrio crunogenus (strain DSM 25203 / XCL-2) (Thiomicrospira crunogena), this protein is Pyridoxine/pyridoxamine 5'-phosphate oxidase 2.